Here is a 379-residue protein sequence, read N- to C-terminus: Alternative oxidase 1, mitochondrial (379 aa).

A compositionally biased stretch (low complexity) spans 33–50 (TTTTSTKSRSSTSTAATT). Positions 33–76 (TTTTSTKSRSSTSTAATTVGNSNPKSPIDEDNLEKPGTIPTKHK) are disordered. The Fe cation site is built by Glu-180, Glu-219, and His-222. Residues 234 to 256 (WFTRSIIYIGQGVFTNIFFLVYL) traverse the membrane as a helical segment. Residues Glu-270, Glu-271, Glu-326, and His-329 each coordinate Fe cation.

This sequence belongs to the alternative oxidase family. Fe cation serves as cofactor.

It is found in the mitochondrion inner membrane. Functionally, catalyzes cyanide-resistant oxygen consumption. May increase respiration when the cytochrome respiratory pathway is restricted, or in response to low temperatures. In Candida albicans (Yeast), this protein is Alternative oxidase 1, mitochondrial (AOX1).